Here is a 348-residue protein sequence, read N- to C-terminus: Uroporphyrinogen decarboxylase (348 aa).

Residues 28 to 32 (RQAGR), Asp78, Tyr154, Thr209, and His325 contribute to the substrate site.

It belongs to the uroporphyrinogen decarboxylase family. Homodimer.

It is found in the cytoplasm. The catalysed reaction is uroporphyrinogen III + 4 H(+) = coproporphyrinogen III + 4 CO2. Its pathway is porphyrin-containing compound metabolism; protoporphyrin-IX biosynthesis; coproporphyrinogen-III from 5-aminolevulinate: step 4/4. Its function is as follows. Catalyzes the decarboxylation of four acetate groups of uroporphyrinogen-III to yield coproporphyrinogen-III. In Rhodopseudomonas palustris (strain BisA53), this protein is Uroporphyrinogen decarboxylase.